Consider the following 800-residue polypeptide: Nucleolar complex protein 3 homolog (800 aa).

2 stretches are compositionally biased toward basic residues: residues 1 to 19 and 42 to 53; these read MGPA…RKLL and KKQRKEQRKLHK. 2 disordered regions span residues 1 to 91 and 167 to 197; these read MGPA…TDMM and KPVL…SAPL. Residues 65–74 show a composition bias toward basic and acidic residues; that stretch reads PLERYKKRPE. The stretch at 449-490 forms a coiled coil; it reads SFKEKRKNLSRMQRKWKKAEEKLQKELLEAEATESKEKKIKL. Positions 780-800 are disordered; sequence LQEEPEQMSLDFTSPHTQQEP. Residues 789 to 800 show a composition bias toward polar residues; it reads LDFTSPHTQQEP.

This sequence belongs to the CBF/MAK21 family.

The protein localises to the nucleus. Its subcellular location is the nucleolus. This Danio rerio (Zebrafish) protein is Nucleolar complex protein 3 homolog (noc3l).